We begin with the raw amino-acid sequence, 289 residues long: Homeobox protein Nkx-2.6 (289 aa).

Disordered regions lie at residues 75–125 and 259–289; these read GSNP…PQRK and TPLA…VTAW. The segment at residues 123-182 is a DNA-binding region (homeobox); it reads QRKSRVLFSQAQVLALERRFKQQRYLTAPEREHLASALQLTSTQVKIWFQNRRYKSKSQR. Residues 261-274 show a composition bias toward polar residues; it reads LASSGFSPGGQSAA.

It belongs to the NK-2 homeobox family. In terms of tissue distribution, not detected in any neonate or adult tissues.

Its subcellular location is the nucleus. In terms of biological role, acts as a transcriptional activator. In conjunction with NKX2-5, may play a role in both pharyngeal and cardiac embryonic development. The protein is Homeobox protein Nkx-2.6 (Nkx2-6) of Mus musculus (Mouse).